The chain runs to 553 residues: Mucolipin-3 (553 aa).

The Cytoplasmic portion of the chain corresponds to 1 to 62 (MADPEVVVSS…FWARGRKPWK (62 aa)). Residues 52 to 62 (KFWARGRKPWK) form an interaction with phosphoinositides region. The helical transmembrane segment at 63–83 (LAIQILKIAMVTIQLVLFGLS) threads the bilayer. At 84–283 (NQMVVAFKEE…VSGSIQKNTH (200 aa)) the chain is on the extracellular side. Residues 104-118 (KGYMDRMDDTYAVYT) form an extracellular/lumenal pore loop region. N-linked (GlcNAc...) asparagine glycosylation is found at N138, N172, and N205. Residues C159 and C185 are joined by a disulfide bond. An intrachain disulfide couples C238 to C269. The chain crosses the membrane as a helical span at residues 284 to 304 (YMMIFDAFVILTCLVSLILCI). At 305–341 (RSVIRGLQLQQEFVNFFLLHYKKEVSVSDQMEFVNGW) the chain is on the cytoplasmic side. The chain crosses the membrane as a helical span at residues 342 to 362 (YIMIIISDILTIIGSILKMEI). Residues 363 to 371 (QAKSLTSYD) lie on the Extracellular side of the membrane. The chain crosses the membrane as a helical span at residues 372-392 (VCSILLGTSTMLVWLGVIRYL). Residues 393–414 (GFFAKYNLLILTLQAALPNVIR) lie on the Cytoplasmic side of the membrane. The helical transmembrane segment at 415-435 (FCCCAAMIYLGYCFCGWIVLG) threads the bilayer. Residues 436 to 443 (PYHDKFRS) are Extracellular-facing. Positions 444 to 464 (LNMVSECLFSLINGDDMFATF) form an intramembrane region, pore-forming. The Selectivity filter motif lies at 456–459 (NGDD). Topologically, residues 465–475 (AKMQQKSYLVW) are extracellular. A helical transmembrane segment spans residues 476-497 (LFSRIYLYSFISLFIYMILSLF). Over 498–553 (IALITDTYETIKQYQQDGFPETELRTFISECKDLPNSGKYRLEDDPPVSLFCCCKK) the chain is Cytoplasmic.

Belongs to the transient receptor (TC 1.A.4) family. Polycystin subfamily. MCOLN3 sub-subfamily. In terms of assembly, homotetramer. Can heterooligomerize with MCOLN1; heteromeric assemblies have different channel properties as compared to the respective homooligomers and may be tissue-specific. May heterooligomerize with TRPV5 to form a functional distinct ion channel. Interacts with GABARAPL2. N-glycosylated.

It localises to the cell membrane. The protein resides in the early endosome membrane. The protein localises to the late endosome membrane. Its subcellular location is the lysosome membrane. It is found in the cytoplasmic vesicle. It localises to the autophagosome membrane. It carries out the reaction Ca(2+)(in) = Ca(2+)(out). It catalyses the reaction K(+)(in) = K(+)(out). The enzyme catalyses Na(+)(in) = Na(+)(out). Its activity is regulated as follows. Channel activity is activated by PtdIns(3,5)P2 (phosphatidylinositol 3,5-bisphosphate). Inhibited by lumenal H(+) and Na(+). The channel pore shows dynamic behavior and undergoes spontaneous, Ca(2+)-dependent modulation when conducting Ca(2+). Its function is as follows. Nonselective cation channel probably playing a role in the regulation of membrane trafficking events. Acts as a Ca(2+)-permeable cation channel with inwardly rectifying activity. Mediates release of Ca(2+) from endosomes to the cytoplasm, contributes to endosomal acidification and is involved in the regulation of membrane trafficking and fusion in the endosomal pathway. Also permeable to Mg(2+), Na(+) and K(+). Does not seem to act as mechanosensory transduction channel in inner ear sensory hair cells. Proposed to play a critical role at the cochlear stereocilia ankle-link region during hair-bundle growth. Involved in the regulation of autophagy. Through association with GABARAPL2 may be involved in autophagosome formation possibly providing Ca(2+) for the fusion process. Through a possible and probably tissue-specific heteromerization with MCOLN1 may be at least in part involved in many lysosome-dependent cellular events. Possible heteromeric ion channel assemblies with TRPV5 show pharmacological similarity with TRPML3. The chain is Mucolipin-3 (MCOLN3) from Homo sapiens (Human).